The primary structure comprises 142 residues: Peptide methionine sulfoxide reductase MsrB (142 aa).

In terms of domain architecture, MsrB spans 3–126 (KEELKKKLSP…NSAALRFIPF (124 aa)). The active-site Nucleophile is Cys115.

This sequence belongs to the MsrB Met sulfoxide reductase family.

It carries out the reaction L-methionyl-[protein] + [thioredoxin]-disulfide + H2O = L-methionyl-(R)-S-oxide-[protein] + [thioredoxin]-dithiol. The sequence is that of Peptide methionine sulfoxide reductase MsrB from Lactococcus lactis subsp. cremoris (strain MG1363).